We begin with the raw amino-acid sequence, 156 residues long: Persephin (156 aa).

Positions 1 to 21 (MAVGKFLLGSLLLLSLQLGQG) are cleaved as a signal peptide. Disulfide bonds link Cys-66/Cys-124, Cys-93/Cys-152, and Cys-97/Cys-154.

The protein belongs to the TGF-beta family. GDNF subfamily. Homodimer; disulfide-linked. Interacts with GFRA4 coreceptor and RET: forms a 2:2:2 ternary complex composed of PSPN ligand, GFRA4 and RET receptor.

It localises to the secreted. Functionally, growth factor that exhibits neurotrophic activity on mesencephalic dopaminergic and motor neurons. Acts by binding to its coreceptor, GFRA4, leading to autophosphorylation and activation of the RET receptor. The chain is Persephin from Homo sapiens (Human).